Here is a 538-residue protein sequence, read N- to C-terminus: Nectin-2 (538 aa).

Positions 1–31 (MARAAALLPSRSPPTPLLWPLLLLLLLETGA) are cleaved as a signal peptide. The Ig-like V-type domain maps to 32–156 (QDVRVQVLPE…KGSVRGMTWL (125 aa)). The Extracellular segment spans residues 32–360 (QDVRVQVLPE…NTAGAGATGG (329 aa)). Intrachain disulfides connect cysteine 54-cysteine 140, cysteine 183-cysteine 238, and cysteine 283-cysteine 329. N-linked (GlcNAc...) asparagine glycosylation is present at asparagine 137. Ig-like C2-type domains lie at 162-256 (PKNQ…VTLS) and 261-345 (PEVS…QVIF). An N-linked (GlcNAc...) asparagine glycan is attached at asparagine 324. A helical membrane pass occupies residues 361-381 (IIGGIIAAIIATAVAATGILI). Over 382–538 (CRQQRKEQTL…GFVMSRAMYV (157 aa)) the chain is Cytoplasmic. Residues 390-414 (TLQGAEEDEDLEGPPSYKPPTPKAK) are disordered. A Phosphothreonine modification is found at threonine 410. Phosphoserine occurs at positions 433, 465, and 470. Residues 462–489 (ERSGPLHPGATSLGSPIPVPPGPPAVED) are disordered.

This sequence belongs to the nectin family. In terms of assembly, can form trans-heterodimers with NECTIN3. Interacts with CD226 or with PVRIG; these interactions are competitive and have a differential functional outcome on T-cell activation, either positive or negative, respectively. Binds with low affinity to TIGIT. (Microbial infection) Interacts with herpes simplex virus 1 (HHV-1) mutant Rid1, herpes simplex virus 1 (HHV-2) and pseudorabies virus (PRV) envelope glycoprotein D. In terms of tissue distribution, ubiquitous.

The protein localises to the cell membrane. Modulator of T-cell signaling. Can be either a costimulator of T-cell function, or a coinhibitor, depending on the receptor it binds to. Upon binding to CD226, stimulates T-cell proliferation and cytokine production, including that of IL2, IL5, IL10, IL13, and IFNG. Upon interaction with PVRIG, inhibits T-cell proliferation. These interactions are competitive. Probable cell adhesion protein. Functionally, (Microbial infection) Acts as a receptor for herpes simplex virus 1 (HHV-1) mutant Rid1, herpes simplex virus 1 (HHV-2) and pseudorabies virus (PRV). In Homo sapiens (Human), this protein is Nectin-2.